The sequence spans 311 residues: Ribonuclease Z (311 aa).

7 residues coordinate Zn(2+): His61, His63, Asp65, His66, His139, Asp210, and His268. Asp65 acts as the Proton acceptor in catalysis.

This sequence belongs to the RNase Z family. Homodimer. Zn(2+) serves as cofactor.

The enzyme catalyses Endonucleolytic cleavage of RNA, removing extra 3' nucleotides from tRNA precursor, generating 3' termini of tRNAs. A 3'-hydroxy group is left at the tRNA terminus and a 5'-phosphoryl group is left at the trailer molecule.. In terms of biological role, zinc phosphodiesterase, which displays some tRNA 3'-processing endonuclease activity. Probably involved in tRNA maturation, by removing a 3'-trailer from precursor tRNA. The polypeptide is Ribonuclease Z (Haloarcula marismortui (strain ATCC 43049 / DSM 3752 / JCM 8966 / VKM B-1809) (Halobacterium marismortui)).